The chain runs to 143 residues: MDQTLSNFGNVFAFLALGVVFVAGGYLTARMLRPSRPNPAKNSTYECGEEAVGSAWVKFNIRFYVVALIFIIFDVEVVFLYPWATVFKQLGEFALIEALVFAGILVLGLAYAWVKGDLDWVRPTPNIPKMPEMPSGKSGALRG.

3 helical membrane-spanning segments follow: residues 8–28, 63–83, and 93–113; these read FGNV…GYLT, FYVV…LYPW, and FALI…AYAW.

The protein belongs to the complex I subunit 3 family. As to quaternary structure, NDH-1 is composed of 14 different subunits. Subunits NuoA, H, J, K, L, M, N constitute the membrane sector of the complex.

Its subcellular location is the cell inner membrane. It carries out the reaction a quinone + NADH + 5 H(+)(in) = a quinol + NAD(+) + 4 H(+)(out). Functionally, NDH-1 shuttles electrons from NADH, via FMN and iron-sulfur (Fe-S) centers, to quinones in the respiratory chain. The immediate electron acceptor for the enzyme in this species is believed to be a menaquinone. Couples the redox reaction to proton translocation (for every two electrons transferred, four hydrogen ions are translocated across the cytoplasmic membrane), and thus conserves the redox energy in a proton gradient. The polypeptide is NADH-quinone oxidoreductase subunit A (Pelodictyon phaeoclathratiforme (strain DSM 5477 / BU-1)).